The chain runs to 107 residues: Large ribosomal subunit protein uL24 (107 aa).

This sequence belongs to the universal ribosomal protein uL24 family. Part of the 50S ribosomal subunit.

Functionally, one of two assembly initiator proteins, it binds directly to the 5'-end of the 23S rRNA, where it nucleates assembly of the 50S subunit. One of the proteins that surrounds the polypeptide exit tunnel on the outside of the subunit. The polypeptide is Large ribosomal subunit protein uL24 (Nitrosomonas eutropha (strain DSM 101675 / C91 / Nm57)).